Reading from the N-terminus, the 447-residue chain is Cysteine--tRNA ligase (447 aa).

Cys-28 provides a ligand contact to Zn(2+). A 'HIGH' region motif is present at residues 30-40 (PTVYNYIHIGN). Zn(2+) is bound by residues Cys-211, His-236, and Glu-240. Residues 268–272 (KMSKS) carry the 'KMSKS' region motif. Lys-271 provides a ligand contact to ATP.

The protein belongs to the class-I aminoacyl-tRNA synthetase family. As to quaternary structure, monomer. It depends on Zn(2+) as a cofactor.

The protein localises to the cytoplasm. It catalyses the reaction tRNA(Cys) + L-cysteine + ATP = L-cysteinyl-tRNA(Cys) + AMP + diphosphate. The polypeptide is Cysteine--tRNA ligase (Streptococcus pyogenes serotype M28 (strain MGAS6180)).